The primary structure comprises 1186 residues: Atrophin-1 (1186 aa).

3 disordered regions span residues 1-604 (MKTR…PTVT), 618-763 (ASSP…ARFN), and 781-858 (VPLE…HRPP). The Nuclear localization signal signature appears at 16–32 (RKKEAPGPREELRSRGR). Over residues 17-29 (KKEAPGPREELRS) the composition is skewed to basic and acidic residues. Ser34 bears the Phosphoserine mark. Residues 45–63 (GKAEKSRQTAKKARVEEAS) show a composition bias toward basic and acidic residues. 5 positions are modified to phosphoserine: Ser77, Ser79, Ser100, Ser102, and Ser106. Residues 107-127 (LDGRSLNDDGSSDPRDIDQDN) are compositionally biased toward basic and acidic residues. A compositionally biased stretch (polar residues) spans 128 to 151 (RSTSPSIYSPGSVENDSDSSSGLS). Residues 157–173 (PYHPPPLFPPSPQPPDS) show a composition bias toward pro residues. Low complexity-rich tracts occupy residues 258–270 (PISV…SGAP), 349–365 (PTLA…SSSA), and 375–396 (SSSS…SSAS). A compositionally biased stretch (polar residues) spans 416-437 (SLSVSNQPPKYTQPSLPSQAVW). The span at 484 to 503 (QQQQQQQQQQQQQQQHHGNS) shows a compositional bias: low complexity. The segment at 513 to 563 (HPLEGGSSHHAHPYAMSPSLGSLRPYPPGPAHLPPPHSQVSYSQAGPNGPP) is involved in binding BAIAP2. Over residues 537 to 549 (PYPPGPAHLPPPH) the composition is skewed to pro residues. Composition is skewed to low complexity over residues 565 to 582 (SSSS…YPCS) and 618 to 628 (ASSPAGYKTAS). Position 628 is a phosphoserine (Ser628). N6-acetyllysine is present on Lys637. Thr649 is subject to Phosphothreonine. Ser657 is subject to Phosphoserine. A Phosphothreonine modification is found at Thr665. 2 stretches are compositionally biased toward pro residues: residues 689-714 (GPGP…PASG) and 735-748 (SPVP…PPPK). Ser735 is modified (phosphoserine; by MAPK8). Phosphoserine occurs at positions 742 and 744. The span at 791-835 (KRADLVEKVRREAEQRAREEKEREREREREKEREREKERELERSV) shows a compositional bias: basic and acidic residues. Residues 875–890 (DTPALRTLSEYARPHV) form a required for interaction with FAT1 region. The residue at position 892 (Ser892) is a Phosphoserine. Positions 1029–1037 (ALGNDPLAR) match the Nuclear export signal motif. Arg1111 bears the Asymmetric dimethylarginine mark. A Glycyl lysine isopeptide (Lys-Gly) (interchain with G-Cter in SUMO2) cross-link involves residue Lys1179.

In terms of assembly, interacts with NR2E1; the interaction represses the transcriptional activity of NR2E1. Interacts with BAIAP2, WWP1, WWP2, WWP3 and RERE. Interacts (via its N-terminus) with MTG8; the interaction enhances transcriptional repression of MTG8. Interacts with FAT1 (via a C-terminal domain). Interacts with PQBP1. In terms of processing, phosphorylated in vitro by MAPK8/JNK1 on Ser-735.

The protein localises to the nucleus. The protein resides in the cytoplasm. It localises to the perinuclear region. It is found in the cell junction. Functionally, transcriptional corepressor. Corepressor of MTG8 transcriptional repression. Recruits NR2E1 to repress transcription. Has some intrinsic repression activity. Promotes vascular smooth cell (VSMC) migration and orientation. This chain is Atrophin-1 (ATN1), found in Pan troglodytes (Chimpanzee).